A 603-amino-acid polypeptide reads, in one-letter code: uncharacterized protein (603 aa).

Acidic residues predominate over residues 496 to 513; it reads EEEDQEEDDTSDDDDQEK. Disordered regions lie at residues 496–536 and 549–568; these read EEED…GSLE and AVAE…DTAQ. The span at 517 to 533 shows a compositional bias: polar residues; sequence NPQNNIGSLTRTPSSPG.

Belongs to the herpesviridae US22 family.

This is an uncharacterized protein from Human cytomegalovirus (strain AD169) (HHV-5).